The sequence spans 557 residues: Glucose-6-phosphate isomerase (557 aa).

The active-site Proton donor is the E359. Residues H390 and K518 contribute to the active site.

The protein belongs to the GPI family.

It is found in the cytoplasm. It carries out the reaction alpha-D-glucose 6-phosphate = beta-D-fructose 6-phosphate. It participates in carbohydrate biosynthesis; gluconeogenesis. It functions in the pathway carbohydrate degradation; glycolysis; D-glyceraldehyde 3-phosphate and glycerone phosphate from D-glucose: step 2/4. Its function is as follows. Catalyzes the reversible isomerization of glucose-6-phosphate to fructose-6-phosphate. The protein is Glucose-6-phosphate isomerase of Hahella chejuensis (strain KCTC 2396).